The sequence spans 454 residues: MALNVVILAAGKGTRMRSDLPKVLHPIAHKSMVQHVIDTAHNVGSDAIQLVYGYGGEKLQSVLGEQQLNWVLQAEQLGTGHAVAQANSNIADDDTVLILYGDVPLIQASTLEALLAAREENGLAILTVNLPNPTGYGRIVREANKVVGIIEQKDANAEQLAINEINTGIMAAPGKQLKAWLGQLSSNNAQGEYYLTDIVAMAHRDGVAITTAQPDSAIEVEGANNRVQLAQLERAYQARAAEKLMLEGANLRDPARIDIRGEVSVGMDVMIDVNVIMQGKVTIGNNVTIGAGAILIDCEISDNAEIKPYSIVESAKVGAEASAGPFARLRPGAELKRDAHIGNFVEMKKAVLGEGSKAGHLAYIGDAQIGSGVNIGAGTITCNYDGANKHLTVIEDNVFVGSDTQLVAPVTIGKGATLGAGSTITKDVAADELVITRVKQRHLTGWPRPVKLKK.

The tract at residues 1–226 (MALNVVILAA…AIEVEGANNR (226 aa)) is pyrophosphorylase. UDP-N-acetyl-alpha-D-glucosamine-binding positions include 8–11 (LAAG), lysine 22, glutamine 73, 78–79 (GT), 100–102 (YGD), glycine 137, glutamate 151, asparagine 166, and asparagine 224. Residue aspartate 102 coordinates Mg(2+). Asparagine 224 serves as a coordination point for Mg(2+). The interval 227–247 (VQLAQLERAYQARAAEKLMLE) is linker. An N-acetyltransferase region spans residues 248–454 (GANLRDPARI…GWPRPVKLKK (207 aa)). Residues arginine 330 and lysine 348 each coordinate UDP-N-acetyl-alpha-D-glucosamine. Residue histidine 360 is the Proton acceptor of the active site. The UDP-N-acetyl-alpha-D-glucosamine site is built by tyrosine 363 and asparagine 374. Acetyl-CoA contacts are provided by residues alanine 377, 383-384 (NY), serine 402, alanine 420, and arginine 437.

In the N-terminal section; belongs to the N-acetylglucosamine-1-phosphate uridyltransferase family. This sequence in the C-terminal section; belongs to the transferase hexapeptide repeat family. As to quaternary structure, homotrimer. Mg(2+) is required as a cofactor.

It is found in the cytoplasm. It carries out the reaction alpha-D-glucosamine 1-phosphate + acetyl-CoA = N-acetyl-alpha-D-glucosamine 1-phosphate + CoA + H(+). The catalysed reaction is N-acetyl-alpha-D-glucosamine 1-phosphate + UTP + H(+) = UDP-N-acetyl-alpha-D-glucosamine + diphosphate. It participates in nucleotide-sugar biosynthesis; UDP-N-acetyl-alpha-D-glucosamine biosynthesis; N-acetyl-alpha-D-glucosamine 1-phosphate from alpha-D-glucosamine 6-phosphate (route II): step 2/2. Its pathway is nucleotide-sugar biosynthesis; UDP-N-acetyl-alpha-D-glucosamine biosynthesis; UDP-N-acetyl-alpha-D-glucosamine from N-acetyl-alpha-D-glucosamine 1-phosphate: step 1/1. The protein operates within bacterial outer membrane biogenesis; LPS lipid A biosynthesis. Its function is as follows. Catalyzes the last two sequential reactions in the de novo biosynthetic pathway for UDP-N-acetylglucosamine (UDP-GlcNAc). The C-terminal domain catalyzes the transfer of acetyl group from acetyl coenzyme A to glucosamine-1-phosphate (GlcN-1-P) to produce N-acetylglucosamine-1-phosphate (GlcNAc-1-P), which is converted into UDP-GlcNAc by the transfer of uridine 5-monophosphate (from uridine 5-triphosphate), a reaction catalyzed by the N-terminal domain. The protein is Bifunctional protein GlmU of Shewanella woodyi (strain ATCC 51908 / MS32).